We begin with the raw amino-acid sequence, 281 residues long: 2-C-methyl-D-erythritol 4-phosphate cytidylyltransferase (281 aa).

It belongs to the IspD/TarI cytidylyltransferase family. IspD subfamily.

It catalyses the reaction 2-C-methyl-D-erythritol 4-phosphate + CTP + H(+) = 4-CDP-2-C-methyl-D-erythritol + diphosphate. It participates in isoprenoid biosynthesis; isopentenyl diphosphate biosynthesis via DXP pathway; isopentenyl diphosphate from 1-deoxy-D-xylulose 5-phosphate: step 2/6. Catalyzes the formation of 4-diphosphocytidyl-2-C-methyl-D-erythritol from CTP and 2-C-methyl-D-erythritol 4-phosphate (MEP). In Psychrobacter arcticus (strain DSM 17307 / VKM B-2377 / 273-4), this protein is 2-C-methyl-D-erythritol 4-phosphate cytidylyltransferase.